The primary structure comprises 606 residues: Arginine--tRNA ligase (606 aa).

The 'HIGH' region signature appears at Pro-126–His-136.

It belongs to the class-I aminoacyl-tRNA synthetase family. As to quaternary structure, monomer.

Its subcellular location is the cytoplasm. The catalysed reaction is tRNA(Arg) + L-arginine + ATP = L-arginyl-tRNA(Arg) + AMP + diphosphate. The chain is Arginine--tRNA ligase from Phocaeicola vulgatus (strain ATCC 8482 / DSM 1447 / JCM 5826 / CCUG 4940 / NBRC 14291 / NCTC 11154) (Bacteroides vulgatus).